A 133-amino-acid polypeptide reads, in one-letter code: Small ribosomal subunit protein uS9 (133 aa).

The protein belongs to the universal ribosomal protein uS9 family.

This chain is Small ribosomal subunit protein uS9, found in Ureaplasma urealyticum serovar 10 (strain ATCC 33699 / Western).